Reading from the N-terminus, the 247-residue chain is MNVLSYSINTLKGLYEISGVEVGQHFYWKIGGFQVHAQVLITSWVVIVILLGSAIVTVRNPQTIPTDGQNFFEYILEFIRDVSKTQIGEEYGPWVPFIGTLFLFIFVSNWSGALLPWKIIELPHGELAAPTNDINTTVALALLTSIAYFYAGLSKKGLGYFGKYIQPTPILLPINILEDFTKPLSLSFRLFGNILADELVVVVLVSLVPSVVPIPVMFLGLFTSGIQALIFATLAAAYIGESMEGHH.

5 helical membrane-spanning segments follow: residues 38-58 (QVLI…IVTV), 95-115 (VPFI…GALL), 134-154 (INTT…AGLS), 199-219 (LVVV…VMFL), and 220-240 (GLFT…AYIG).

The protein belongs to the ATPase A chain family. F-type ATPases have 2 components, CF(1) - the catalytic core - and CF(0) - the membrane proton channel. CF(1) has five subunits: alpha(3), beta(3), gamma(1), delta(1), epsilon(1). CF(0) has four main subunits: a, b, b' and c.

It is found in the plastid. Its subcellular location is the chloroplast thylakoid membrane. Key component of the proton channel; it plays a direct role in the translocation of protons across the membrane. This is ATP synthase subunit a, chloroplastic from Populus trichocarpa (Western balsam poplar).